The sequence spans 336 residues: Biotin synthase (336 aa).

The region spanning 57-286 (HHGKSIDLCS…RAIVRTAGGR (230 aa)) is the Radical SAM core domain. Positions 75, 79, and 82 each coordinate [4Fe-4S] cluster. Serine 119, cysteine 151, cysteine 211, and arginine 281 together coordinate [2Fe-2S] cluster.

Belongs to the radical SAM superfamily. Biotin synthase family. Homodimer. It depends on [4Fe-4S] cluster as a cofactor. The cofactor is [2Fe-2S] cluster.

The enzyme catalyses (4R,5S)-dethiobiotin + (sulfur carrier)-SH + 2 reduced [2Fe-2S]-[ferredoxin] + 2 S-adenosyl-L-methionine = (sulfur carrier)-H + biotin + 2 5'-deoxyadenosine + 2 L-methionine + 2 oxidized [2Fe-2S]-[ferredoxin]. The protein operates within cofactor biosynthesis; biotin biosynthesis; biotin from 7,8-diaminononanoate: step 2/2. Catalyzes the conversion of dethiobiotin (DTB) to biotin by the insertion of a sulfur atom into dethiobiotin via a radical-based mechanism. This chain is Biotin synthase, found in Desulfotalea psychrophila (strain LSv54 / DSM 12343).